Here is a 555-residue protein sequence, read N- to C-terminus: Aerobic glycerol-3-phosphate dehydrogenase (555 aa).

Aspartate 24 to glutamate 52 is a binding site for FAD.

Belongs to the FAD-dependent glycerol-3-phosphate dehydrogenase family. Requires FAD as cofactor.

The protein resides in the cytoplasm. It carries out the reaction a quinone + sn-glycerol 3-phosphate = dihydroxyacetone phosphate + a quinol. It functions in the pathway polyol metabolism; glycerol degradation via glycerol kinase pathway; glycerone phosphate from sn-glycerol 3-phosphate (aerobic route): step 1/1. The sequence is that of Aerobic glycerol-3-phosphate dehydrogenase (glpD) from Bacillus subtilis (strain 168).